The primary structure comprises 61 residues: Metallothionein-I, hippocampal (61 aa).

At methionine 1 the chain carries N-acetylmethionine. Positions 1–29 are beta; sequence MDPNCSCATGDSCACASTCKCKECKCTSC. A divalent metal cation-binding residues include cysteine 5, cysteine 7, cysteine 13, cysteine 15, cysteine 19, cysteine 21, cysteine 24, cysteine 26, cysteine 29, cysteine 33, cysteine 34, cysteine 36, cysteine 37, cysteine 41, cysteine 44, cysteine 48, cysteine 50, and cysteine 57. The alpha stretch occupies residues 30–61; it reads KKSCCSCCPVGCAKCAQGCICKGASDKCSCCA. The residue at position 58 (serine 58) is a Phosphoserine. Residues cysteine 59 and cysteine 60 each contribute to the a divalent metal cation site.

The protein belongs to the metallothionein superfamily. Type 1 family.

Metallothioneins have a high content of cysteine residues that bind various heavy metals; these proteins are transcriptionally regulated by both heavy metals and glucocorticoids. This isoform may play a role in regulating the transport, accumulation, and compartmentation of zinc in the hippocampus. This is Metallothionein-I, hippocampal from Bos taurus (Bovine).